The primary structure comprises 271 residues: Bis(5'-nucleosyl)-tetraphosphatase, symmetrical (271 aa).

Belongs to the Ap4A hydrolase family.

It carries out the reaction P(1),P(4)-bis(5'-adenosyl) tetraphosphate + H2O = 2 ADP + 2 H(+). Hydrolyzes diadenosine 5',5'''-P1,P4-tetraphosphate to yield ADP. The polypeptide is Bis(5'-nucleosyl)-tetraphosphatase, symmetrical (Aliivibrio fischeri (strain ATCC 700601 / ES114) (Vibrio fischeri)).